The chain runs to 373 residues: GDP-mannose 4,6-dehydratase (373 aa).

Residues 10–15 (GITGQD), 65–66 (DL), 87–91 (LGAQS), and Y102 contribute to the NADP(+) site. The active site involves T134. Active-site nucleophile residues include E136 and Y158. The NADP(+) site is built by K162, H188, and R193.

This sequence belongs to the NAD(P)-dependent epimerase/dehydratase family. GDP-mannose 4,6-dehydratase subfamily. It depends on NADP(+) as a cofactor.

It carries out the reaction GDP-alpha-D-mannose = GDP-4-dehydro-alpha-D-rhamnose + H2O. Functionally, catalyzes the conversion of GDP-D-mannose to GDP-4-dehydro-6-deoxy-D-mannose. The chain is GDP-mannose 4,6-dehydratase from Vibrio cholerae serotype O1 (strain ATCC 39315 / El Tor Inaba N16961).